A 376-amino-acid polypeptide reads, in one-letter code: Chaperone protein DnaJ (376 aa).

A J domain is found at 5–70 (DYYEILGVSK…QKRAAYDQYG (66 aa)). The CR-type zinc-finger motif lies at 131 to 209 (GVTKEIRIPT…CHGHGRVERS (79 aa)). Zn(2+) contacts are provided by cysteine 144, cysteine 147, cysteine 161, cysteine 164, cysteine 183, cysteine 186, cysteine 197, and cysteine 200. CXXCXGXG motif repeat units follow at residues 144 to 151 (CDVCHGSG), 161 to 168 (CPTCHGSG), 183 to 190 (CPHCQGRG), and 197 to 204 (CNKCHGHG).

This sequence belongs to the DnaJ family. As to quaternary structure, homodimer. It depends on Zn(2+) as a cofactor.

It is found in the cytoplasm. Participates actively in the response to hyperosmotic and heat shock by preventing the aggregation of stress-denatured proteins and by disaggregating proteins, also in an autonomous, DnaK-independent fashion. Unfolded proteins bind initially to DnaJ; upon interaction with the DnaJ-bound protein, DnaK hydrolyzes its bound ATP, resulting in the formation of a stable complex. GrpE releases ADP from DnaK; ATP binding to DnaK triggers the release of the substrate protein, thus completing the reaction cycle. Several rounds of ATP-dependent interactions between DnaJ, DnaK and GrpE are required for fully efficient folding. Also involved, together with DnaK and GrpE, in the DNA replication of plasmids through activation of initiation proteins. This chain is Chaperone protein DnaJ, found in Escherichia coli (strain K12 / DH10B).